Consider the following 610-residue polypeptide: Protein mono-ADP-ribosyltransferase PARP6 (610 aa).

Residues 374 to 600 (EMTQGSYLEI…QDPKIQKEIM (227 aa)) form the PARP catalytic domain. ADP-ribosyl aspartic acid is present on Asp580.

Belongs to the ARTD/PARP family. Post-translationally, auto-mono-ADP-ribosylated.

The enzyme catalyses L-aspartyl-[protein] + NAD(+) = 4-O-(ADP-D-ribosyl)-L-aspartyl-[protein] + nicotinamide. It catalyses the reaction L-cysteinyl-[protein] + NAD(+) = S-(ADP-D-ribosyl)-L-cysteinyl-[protein] + nicotinamide + H(+). Functionally, mono-ADP-ribosyltransferase that mediates mono-ADP-ribosylation of target proteins. The chain is Protein mono-ADP-ribosyltransferase PARP6 from Pongo abelii (Sumatran orangutan).